A 115-amino-acid polypeptide reads, in one-letter code: Large ribosomal subunit protein bL19 (115 aa).

It belongs to the bacterial ribosomal protein bL19 family.

Functionally, this protein is located at the 30S-50S ribosomal subunit interface and may play a role in the structure and function of the aminoacyl-tRNA binding site. This is Large ribosomal subunit protein bL19 from Streptococcus pyogenes serotype M49 (strain NZ131).